Consider the following 126-residue polypeptide: Large ribosomal subunit protein bL12 (126 aa).

The tract at residues 97–126 (PQPVKSGVSKEEAEEAKKQLAESGAEVEVK) is disordered. Residues 104 to 116 (VSKEEAEEAKKQL) show a composition bias toward basic and acidic residues.

The protein belongs to the bacterial ribosomal protein bL12 family. As to quaternary structure, homodimer. Part of the ribosomal stalk of the 50S ribosomal subunit. Forms a multimeric L10(L12)X complex, where L10 forms an elongated spine to which 2 to 4 L12 dimers bind in a sequential fashion. Binds GTP-bound translation factors.

Its function is as follows. Forms part of the ribosomal stalk which helps the ribosome interact with GTP-bound translation factors. Is thus essential for accurate translation. In Geotalea uraniireducens (strain Rf4) (Geobacter uraniireducens), this protein is Large ribosomal subunit protein bL12.